The sequence spans 320 residues: NAC domain-containing protein 20 (320 aa).

Positions 14 to 170 constitute an NAC domain; sequence LPPGFRFHPT…DWAVCRIFHK (157 aa). A DNA-binding region spans residues 114–176; sequence IGMKKTLVFY…IFHKSSGIKK (63 aa).

As to quaternary structure, forms homodimers. Forms heterodimers with NAC26. In terms of tissue distribution, expressed in developing seeds. Expressed in developing endosperm.

The protein resides in the nucleus. It is found in the endoplasmic reticulum. In terms of biological role, transcription factor that acts redundantly with NAC26 to regulate the expression of genes involved in the biosynthesis of starch and storage proteins in grain. Directly binds to the promoters of starch synthase 1 (SS1), pullulanase (PUL), glutelin A1 (GLUA1), glutelins B4 and B5 (GLUB4 and GLUB5), alpha-globulin and 16 kDa prolamin, and activates their expression. This Oryza sativa subsp. japonica (Rice) protein is NAC domain-containing protein 20.